We begin with the raw amino-acid sequence, 302 residues long: FeMo cofactor biosynthesis protein NifB (302 aa).

In terms of domain architecture, Radical SAM core spans 22–264; sequence HDKYGRVHLP…PQFRACGQCR (243 aa). The [4Fe-4S] cluster site is built by Cys-36, Cys-40, and Cys-43. Residues Gly-91, Thr-142, and Ile-194 each coordinate S-adenosyl-L-methionine. The [4Fe-4S] cluster site is built by Cys-260 and Cys-263.

Belongs to the radical SAM superfamily. NifB family. In terms of assembly, monomer. [4Fe-4S] cluster serves as cofactor.

It participates in cofactor biosynthesis; Fe-Mo cofactor biosynthesis. Functionally, involved in the biosynthesis of the iron-molybdenum cofactor (FeMo-co or M-cluster) found in the dinitrogenase enzyme of the nitrogenase complex in nitrogen-fixing microorganisms. NifB catalyzes the crucial step of radical SAM-dependent carbide insertion that occurs concomitant with the insertion of a 9th sulfur and the rearrangement/coupling of two [4Fe-4S] clusters into a [8Fe-9S-C] cluster, the precursor to the M-cluster. The sequence is that of FeMo cofactor biosynthesis protein NifB from Methanocaldococcus infernus (strain DSM 11812 / JCM 15783 / ME).